The primary structure comprises 294 residues: Putative maltodextrin utilization protein YvdJ (294 aa).

A run of 4 helical transmembrane segments spans residues 35–55 (LSFL…VSFV), 184–204 (MIMM…TFVL), 228–248 (IAIC…MVHF), and 249–269 (DLIT…SFAF).

The protein resides in the cell membrane. Its function is as follows. Could have a role in maltodextrin utilization. The protein is Putative maltodextrin utilization protein YvdJ (yvdJ) of Bacillus subtilis (strain 168).